The sequence spans 251 residues: Prothoracicostatic peptides (251 aa).

The interval 1–22 is disordered; that stretch reads MRKSARGQVCTEAGAGASGDWQ. A propeptide spanning residues 1-77 is cleaved from the precursor; sequence MRKSARGQVC…GWQDLNSAWG (77 aa). At Trp89 the chain carries Tryptophan amide. The propeptide occupies 93-138; the sequence is GWNDMSSAWGKRGWNDMSSAWGKRGWNDMSSAWGKRGWNDMSSAWG. Residue Trp152 is modified to Tryptophan amide. The propeptide occupies 156–187; the sequence is AAEPDYEEIDAAIEQLIPIQQLSDNERMEVPE. Tryptophan amide is present on residues Trp198 and Trp228. The tract at residues 227 to 251 is disordered; it reads MWGKRSAPDADAVDDDHESSARDEA.

In terms of tissue distribution, prothoracicostatic peptide 5: Expressed in antennal lobe (AL), corpora cardiaca (CC), corpora allata (CA) and gnathal ganglion (GNG) (at protein level). Expression in AL detected in all animals, in CC, CA and GNG in most (at protein level). Prothoracicostatic peptide 6: Expressed in antennal lobe (AL), corpora cardiaca (CC), corpora allata (CA) and gnathal ganglion (GNG) (at protein level). Expression in AL detected in all animals, expression in GNG in most animals, in CA and CC detected in some animals (at protein level). Prothoracicostatic peptide 7: Expressed in antennal lobe (AL), corpora cardiaca (CC), corpora allata (CA) and gnathal ganglion (GNG) (at protein level). Expression in AL, CA and CC detected in most animals, expression in GNG in some animals (at protein level). Prothoracicostatic peptide precursor-related peptide 2: Expressed in antennal lobe (AL), corpora cardiaca (CC) and corpora allata (CA) with expression detected in few animals (at protein level). Not expressed in gnathal ganglion (GNG) (at protein level). Prothoracicostatic peptide 8: Expressed in antennal lobe (AL), corpora cardiaca (CC), corpora allata (CA) and gnathal ganglion (GNG) (at protein level). Expression in AL detected in all animals, expression in GNG in most animals, in CA and CC detected in some animals (at protein level). Prothoracicostatic peptide precursor-related peptide 3: Expressed in antennal lobe (AL) in few animals (at protein level). Not expressed in corpora cardiaca (CC), corpora allata (CA) and gnathal ganglion (GNG) (at protein level).

It is found in the secreted. The protein is Prothoracicostatic peptides of Agrotis ipsilon (Black cutworm moth).